The primary structure comprises 117 residues: Large ribosomal subunit protein uL18 (117 aa).

The protein belongs to the universal ribosomal protein uL18 family. Part of the 50S ribosomal subunit; part of the 5S rRNA/L5/L18/L25 subcomplex. Contacts the 5S and 23S rRNAs.

This is one of the proteins that bind and probably mediate the attachment of the 5S RNA into the large ribosomal subunit, where it forms part of the central protuberance. The chain is Large ribosomal subunit protein uL18 from Leuconostoc mesenteroides subsp. mesenteroides (strain ATCC 8293 / DSM 20343 / BCRC 11652 / CCM 1803 / JCM 6124 / NCDO 523 / NBRC 100496 / NCIMB 8023 / NCTC 12954 / NRRL B-1118 / 37Y).